A 202-amino-acid chain; its full sequence is MDAVTGIILAGGESRRFGGGNKAFRMLDGRTMIDRVHDTVKSVCDDMVIVANTPLDYLGWNAVLATDLFDFRGSLVGIHAGLMSAGHEYAFISACDTPFLKQAVIKTIIGGIEDHIDVVVPEKKEGMEPLCAVYSRRCLEVIERHLHQGRMVIKAVYNKLRVRTISEKRLRAVDPDLVSFWNINTKEELEKAEAAIKAGRIS.

Residues 9 to 11 (LAG), lysine 22, aspartate 70, and aspartate 96 contribute to the GTP site. Aspartate 96 lines the Mg(2+) pocket.

The protein belongs to the MobA family. As to quaternary structure, monomer. Mg(2+) serves as cofactor.

The protein localises to the cytoplasm. The catalysed reaction is Mo-molybdopterin + GTP + H(+) = Mo-molybdopterin guanine dinucleotide + diphosphate. Functionally, transfers a GMP moiety from GTP to Mo-molybdopterin (Mo-MPT) cofactor (Moco or molybdenum cofactor) to form Mo-molybdopterin guanine dinucleotide (Mo-MGD) cofactor. This chain is Molybdenum cofactor guanylyltransferase, found in Desulfosudis oleivorans (strain DSM 6200 / JCM 39069 / Hxd3) (Desulfococcus oleovorans).